The sequence spans 644 residues: MINVTLPDGSKRELPDGASPLDLAADISKSLAKAAIIATVDGQDWDLKRPLDGDAQVAIITRKDDKALEVIRHDTAHILAQAVQDLFPGTQVTIGPAIEDGFYYDFARSEPFTPEDFEAIEKRMGEIVDADLPFEREVWDRNDAIAKFEEMGEAYKAELIRDLPEDETITIYRQGEWFDLCLGPHLPSTGKIGKAFKLMKVAGAYWRGDHRNAMLQRIYGTAWADDKQLKAHLHRIEEAEKRDHRKLGKQMELFHFQEEAQGQVFWHPNGWRLYRTVTSYMRRRLEAAGYVEIRTPQLMDRKFWEASGHWDKYRENMFISSIDQEEKVLAVKPMNCPCHVQVFNQGQKSYRDLPLRMAEFGSCHRYEPSGSLHGLMRVRGFVQDDAHIFCTSDQITAEVSDFCELLKSVYADFGFEEPRIKFSDRPEQRVGSDEVWDQAEASLKAAAEASGLDYEYNPGDGAFYGPKLDFVVKDAIGREWQTGTIQCDFNLPERLDASFIGDDSEKHRPVMLHRAILGSLERFLGVLIESYAGKLPFWLAPRQVVIATITSDADGYAEEVKAAMVKAGLHAETDLRNEKINYKVREHSVGKVPVIAVVGRKEAEDGTLALRFLGEGGKTQEILSLADAIARLSEDAKAPDLKRV.

The region spanning 1–61 (MINVTLPDGS…DGDAQVAIIT (61 aa)) is the TGS domain. Residues 243-536 (DHRKLGKQME…LIESYAGKLP (294 aa)) form a catalytic region. Zn(2+) is bound by residues C336, H387, and H513.

It belongs to the class-II aminoacyl-tRNA synthetase family. As to quaternary structure, homodimer. Zn(2+) is required as a cofactor.

Its subcellular location is the cytoplasm. It carries out the reaction tRNA(Thr) + L-threonine + ATP = L-threonyl-tRNA(Thr) + AMP + diphosphate + H(+). In terms of biological role, catalyzes the attachment of threonine to tRNA(Thr) in a two-step reaction: L-threonine is first activated by ATP to form Thr-AMP and then transferred to the acceptor end of tRNA(Thr). Also edits incorrectly charged L-seryl-tRNA(Thr). The sequence is that of Threonine--tRNA ligase from Maricaulis maris (strain MCS10) (Caulobacter maris).